We begin with the raw amino-acid sequence, 501 residues long: Ammonium transporter 2 member 2 (501 aa).

A run of 11 helical transmembrane segments spans residues Val-35–Ile-55, Ser-64–Phe-84, Leu-140–Leu-160, Leu-174–Tyr-194, Gly-203–Gly-223, Ile-238–Gly-258, Thr-274–Gly-294, Val-298–Leu-318, Trp-322–Leu-342, Leu-356–Leu-376, and Phe-412–Ile-432.

The protein belongs to the ammonia transporter channel (TC 1.A.11.2) family.

It is found in the membrane. Its function is as follows. Involved in ammonium transport. The polypeptide is Ammonium transporter 2 member 2 (AMT2-2) (Oryza sativa subsp. japonica (Rice)).